The primary structure comprises 147 residues: Antiholin-like protein LrgA (147 aa).

Helical transmembrane passes span 12-32, 35-55, 74-94, and 98-118; these read PAHFFHQVIVIALVLFVSKII, FMPIPMPGSVIGLVLLFVLLC, NIGLLFVPAGISVVNSLGVIS, and FLIIGLIIVSTILLLICTGYV.

It belongs to the CidA/LrgA family. LrgA subfamily.

The protein resides in the cell membrane. Functionally, inhibits the expression or activity of extracellular murein hydrolases by interacting, possibly with LrgB, with the holin-like proteins CidA and/or CidB. The LrgAB and CidAB proteins may affect the proton motive force of the membrane. May be involved in programmed cell death (PCD), possibly triggering PCD in response to antibiotics and environmental stresses. The chain is Antiholin-like protein LrgA from Staphylococcus aureus (strain MSSA476).